A 985-amino-acid polypeptide reads, in one-letter code: DNA ligase 4 (985 aa).

Disordered stretches follow at residues 1–27 (MDRL…RNKH) and 43–70 (LNGN…QTLS). Residues 10–20 (ETERELDEKYP) are compositionally biased toward basic and acidic residues. Residues 46 to 61 (NKKRPTGPAAARKKLG) show a composition bias toward basic residues. Residues E310, K312, L313, R317, E379, F420, E480, K485, K502, and K504 each coordinate ATP. Catalysis depends on K312, which acts as the N6-AMP-lysine intermediate. E379 is a binding site for Mg(2+). Residue E480 participates in Mg(2+) binding. BRCT domains follow at residues 711–804 (PSGH…PDLL) and 878–983 (LRGW…RFAP).

This sequence belongs to the ATP-dependent DNA ligase family. The cofactor is Mg(2+).

It is found in the nucleus. The catalysed reaction is ATP + (deoxyribonucleotide)n-3'-hydroxyl + 5'-phospho-(deoxyribonucleotide)m = (deoxyribonucleotide)n+m + AMP + diphosphate.. Its function is as follows. DNA ligase involved in DNA non-homologous end joining (NHEJ); required for double-strand break (DSB) repair. The protein is DNA ligase 4 (LIG4) of Coccidioides immitis (strain RS) (Valley fever fungus).